The following is a 372-amino-acid chain: MILQRDSDYSDGTVLGSMCTEPHPVAAEAFVAGLHVNLGDPYLFPNAYRAERECIGWLAETLLDHPAPEEAEGSIVSGGTEANILAAYAAREVTGGREIIVPATRHFSFEKAARMLRMKLVEAPLRSDYTVDVDAVQDLISRDTALIVGIVGTTETGSVDDIEALSDVAEDHGVPLHVDAAFGGFTAPFLREEYPLPRFGFDLEAVVSVTVDPHKMGLVPPPAGGIVFRDDEFPKAIEVYAPYLSGGGASQYTITGTRPGAPVLALYANILELGEEGYRRIAFRCYEETLKVAEKARELGLELAVDPPHLNLVNIRLPDRGTAERLLRESEREGWKISVSTKPLGVRIVMMPHLDAETVSRFLELVARVLGG.

Lys-215 is modified (N6-(pyridoxal phosphate)lysine).

It belongs to the group II decarboxylase family. MfnA subfamily. Requires pyridoxal 5'-phosphate as cofactor.

The enzyme catalyses L-tyrosine + H(+) = tyramine + CO2. It carries out the reaction L-aspartate + H(+) = beta-alanine + CO2. It functions in the pathway cofactor biosynthesis; methanofuran biosynthesis. It participates in cofactor biosynthesis; coenzyme A biosynthesis. Its function is as follows. Catalyzes the decarboxylation of L-tyrosine to produce tyramine for methanofuran biosynthesis. Can also catalyze the decarboxylation of L-aspartate to produce beta-alanine for coenzyme A (CoA) biosynthesis. This chain is Probable L-tyrosine/L-aspartate decarboxylase, found in Methanopyrus kandleri (strain AV19 / DSM 6324 / JCM 9639 / NBRC 100938).